The primary structure comprises 414 residues: MTIKGKYMRLSSDSLSSYLSPNLADNSVVCLMAPTASGKTALAYELYNSGRYELISVDSALVYRDMTVGTAKPNAAELARYPHHLVDIIDPMQSYSVAEFVNDVARLIDSCHQNGKIPLLVGGTMMYYMALLDGLSPVPDSDDSVRARVEQWRQDEGISALYDYLGKVDAISHERLNATDTQRITRAVEVYLQTDIPISDWQRQPKQALAYNPNQQWHALAVMPDRPWLHTRIEQRLDIMWREGLVAEVISLLEHYPLTPGLPSMRCVGYRQVLEYLVQTNHPVFEQPHLDKAQFYDAFAQSEPSSNESKEQDTTIQSSITQTHLPMATAQTEALACQQMQNKALYATRQLAKRQYTWLRKVMQLSNTAAVPTTESITASSTSTVGSDDVTDFQKNKLILHSFSTMEQARAYLV.

33 to 40 (APTASGKT) contributes to the ATP binding site. 35-40 (TASGKT) contributes to the substrate binding site. 3 interaction with substrate tRNA regions span residues 58–61 (DSAL), 182–186 (QRITR), and 266–271 (RCVGYR).

The protein belongs to the IPP transferase family. As to quaternary structure, monomer. The cofactor is Mg(2+).

The enzyme catalyses adenosine(37) in tRNA + dimethylallyl diphosphate = N(6)-dimethylallyladenosine(37) in tRNA + diphosphate. Functionally, catalyzes the transfer of a dimethylallyl group onto the adenine at position 37 in tRNAs that read codons beginning with uridine, leading to the formation of N6-(dimethylallyl)adenosine (i(6)A). In Psychrobacter cryohalolentis (strain ATCC BAA-1226 / DSM 17306 / VKM B-2378 / K5), this protein is tRNA dimethylallyltransferase.